The chain runs to 625 residues: Enolase 4 (625 aa).

The tract at residues 184–226 is disordered; that stretch reads YSTVPTPLPPVPPPPPPPPPTKKKGQKPGRKDTITEKPIAPAE. Residues 189–203 are compositionally biased toward pro residues; it reads TPLPPVPPPPPPPPP. Val-300 serves as a coordination point for substrate. A disordered region spans residues 331–350; that stretch reads PSPPKAETKKGHDGSKRGQQ. Residues 336–346 are compositionally biased toward basic and acidic residues; it reads AETKKGHDGSK. Asn-497 serves as the catalytic Proton acceptor. A substrate-binding site is contributed by Gly-548. Residues 604 to 625 form a disordered region; the sequence is PLVPTFPTQGVEESAETGASSG.

The protein belongs to the enolase family. As to quaternary structure, interacts with ENO1 and AKAP4. In terms of processing, synthesized as an approximately 70-kDa precursor, which then undergoes proteolytic cleavage to an approximately 60-kDa enzyme; HOATZ associates directly or indirectly with ENO4 to mediate this process before its transport to mature flagella.

It carries out the reaction (2R)-2-phosphoglycerate = phosphoenolpyruvate + H2O. Its pathway is carbohydrate degradation; glycolysis; pyruvate from D-glyceraldehyde 3-phosphate: step 4/5. May be required for sperm motility and function. The chain is Enolase 4 from Homo sapiens (Human).